A 1039-amino-acid polypeptide reads, in one-letter code: Antigenic heat-stable 120 kDa protein (1039 aa).

Disordered stretches follow at residues 1 to 115 (MSKD…TSDP), 408 to 438 (SSIETPTTTQVPPITPANQPLQPETSQMPQP), and 1020 to 1039 (QSENLNKSTPIKRESSFPPR). Positions 31 to 44 (PISSTANKDGNPDT) are enriched in polar residues. Over residues 54–69 (EYTEEQKQKLEQEQKE) the composition is skewed to basic and acidic residues. Residues 85–114 (FSFTPASSTQSTPSISSLSGGISSDSQTSD) show a composition bias toward low complexity. Positions 424 to 438 (ANQPLQPETSQMPQP) are enriched in polar residues. Residues 1030–1039 (IKRESSFPPR) show a composition bias toward basic and acidic residues.

The protein resides in the cytoplasm. This is Antigenic heat-stable 120 kDa protein (sca4) from Rickettsia felis (strain ATCC VR-1525 / URRWXCal2) (Rickettsia azadi).